We begin with the raw amino-acid sequence, 255 residues long: Small ribosomal subunit protein uS2 (255 aa).

Belongs to the universal ribosomal protein uS2 family.

The sequence is that of Small ribosomal subunit protein uS2 from Streptococcus uberis (strain ATCC BAA-854 / 0140J).